The sequence spans 166 residues: Large ribosomal subunit protein uL11 (166 aa).

This sequence belongs to the universal ribosomal protein uL11 family. Part of the ribosomal stalk of the 50S ribosomal subunit. Interacts with L10 and the large rRNA to form the base of the stalk. L10 forms an elongated spine to which L12 dimers bind in a sequential fashion forming a multimeric L10(L12)X complex.

Its function is as follows. Forms part of the ribosomal stalk which helps the ribosome interact with GTP-bound translation factors. This is Large ribosomal subunit protein uL11 from Methanopyrus kandleri (strain AV19 / DSM 6324 / JCM 9639 / NBRC 100938).